Consider the following 484-residue polypeptide: Siroheme synthase 1 (484 aa).

The interval 1–205 is precorrin-2 dehydrogenase /sirohydrochlorin ferrochelatase; sequence MHHYPIFLKL…GREAEGEAEL (205 aa). Residues 22–23 and 43–44 each bind NAD(+); these read EA and PV. Position 130 is a phosphoserine (S130). Residues 220 to 484 form a uroporphyrinogen-III C-methyltransferase region; sequence GEVFLVGAGP…DPCWTGGMRD (265 aa). An S-adenosyl-L-methionine-binding site is contributed by P229. D252 acts as the Proton acceptor in catalysis. Residue K274 is the Proton donor of the active site. Residues 305-307, L310, 335-336, M387, and A416 each bind S-adenosyl-L-methionine; these read GGD and SA.

The protein in the N-terminal section; belongs to the precorrin-2 dehydrogenase / sirohydrochlorin ferrochelatase family. In the C-terminal section; belongs to the precorrin methyltransferase family.

The catalysed reaction is uroporphyrinogen III + 2 S-adenosyl-L-methionine = precorrin-2 + 2 S-adenosyl-L-homocysteine + H(+). The enzyme catalyses precorrin-2 + NAD(+) = sirohydrochlorin + NADH + 2 H(+). It carries out the reaction siroheme + 2 H(+) = sirohydrochlorin + Fe(2+). It functions in the pathway cofactor biosynthesis; adenosylcobalamin biosynthesis; precorrin-2 from uroporphyrinogen III: step 1/1. Its pathway is cofactor biosynthesis; adenosylcobalamin biosynthesis; sirohydrochlorin from precorrin-2: step 1/1. The protein operates within porphyrin-containing compound metabolism; siroheme biosynthesis; precorrin-2 from uroporphyrinogen III: step 1/1. It participates in porphyrin-containing compound metabolism; siroheme biosynthesis; siroheme from sirohydrochlorin: step 1/1. It functions in the pathway porphyrin-containing compound metabolism; siroheme biosynthesis; sirohydrochlorin from precorrin-2: step 1/1. In terms of biological role, multifunctional enzyme that catalyzes the SAM-dependent methylations of uroporphyrinogen III at position C-2 and C-7 to form precorrin-2 via precorrin-1. Then it catalyzes the NAD-dependent ring dehydrogenation of precorrin-2 to yield sirohydrochlorin. Finally, it catalyzes the ferrochelation of sirohydrochlorin to yield siroheme. The chain is Siroheme synthase 1 from Halorhodospira halophila (strain DSM 244 / SL1) (Ectothiorhodospira halophila (strain DSM 244 / SL1)).